The following is a 372-amino-acid chain: Ciliary neurotrophic factor receptor subunit alpha (372 aa).

The N-terminal stretch at 1–22 (MAAPVPWACCAVLAAAAAVVYA) is a signal peptide. Residues 27–104 (PQEAPHVQYE…WHLRHQVLLH (78 aa)) enclose the Ig-like C2-type domain. A disulfide bridge connects residues cysteine 46 and cysteine 89. Residues asparagine 60, asparagine 70, asparagine 142, and asparagine 190 are each glycosylated (N-linked (GlcNAc...) asparagine). Fibronectin type-III domains lie at 108–205 (PPRE…VKPD) and 206–306 (PPEN…TEEP). Residues 290–294 (WSDWS) carry the WSXWS motif motif. The interval 301–340 (PWTEEPRHLTTEAQAPETTTSTTSSLAPPPTTKICDPGEL) is disordered. Residues 311–326 (TEAQAPETTTSTTSSL) are compositionally biased toward low complexity. Residue serine 342 is the site of GPI-anchor amidated serine attachment. Residues 343 to 372 (GGGPSAPFLIHVPVTLALAAAAATANSLLI) constitute a propeptide, removed in mature form.

This sequence belongs to the type I cytokine receptor family. Type 3 subfamily. Forms a heterotrimer with LIFR and IL6ST. Interacts with heterodimeric neurotropic cytokine composed of CLCF1/CLC and CRLF1/CLF-1. Either alone or in complex with the heterodimer CLCF1-CRLF1 interacts with SORL1; this interaction may promote internalization and lysosomal degradation. As to expression, expressed in retina, brain, spleen, lung, liver and kidney. In the retina it is highly expressed by photoreceptors, but also found in the RPE, inner nuclear layer and ganglion cells.

The protein resides in the cell membrane. Functionally, binds to CNTF. The alpha subunit provides the receptor specificity. The protein is Ciliary neurotrophic factor receptor subunit alpha (CNTFR) of Canis lupus familiaris (Dog).